We begin with the raw amino-acid sequence, 164 residues long: MPDRKGDRGRHQARKRAVDLLFEAEARGITAAEVAEARNALADNGADDIAPLNPYTVTVARGVTDHAAHIDDLISAHLQGWTLDRLPAVDRAVLRVAVWELLHAVDVPEPVAVDEAVELAKQLSTDDSPGFVNGVLGQVMLVTPQIRAAAAAVQASPDSGSATP.

The protein belongs to the NusB family.

Its function is as follows. Involved in transcription antitermination. Required for transcription of ribosomal RNA (rRNA) genes. Binds specifically to the boxA antiterminator sequence of the ribosomal RNA (rrn) operons. This Mycolicibacterium gilvum (strain PYR-GCK) (Mycobacterium gilvum (strain PYR-GCK)) protein is Transcription antitermination protein NusB.